The following is a 622-amino-acid chain: Probable ATP-dependent RNA helicase DDX41 (622 aa).

The segment covering 1–15 has biased composition (basic and acidic residues); sequence MEDSEPERKRARADE. Disordered regions lie at residues 1–39 and 51–84; these read MEDSEPERKRARADEATAGGSRSEDEDEDDEDYVPYVPL and LQRRRKGATEEEQQDSGSEPRGDEDDIPLGPQSN. S4 is subject to Phosphoserine. K9 is subject to N6-acetyllysine. K9 is covalently cross-linked (Glycyl lysine isopeptide (Lys-Gly) (interchain with G-Cter in ubiquitin)). S21 and S23 each carry phosphoserine. Positions 24 to 33 are enriched in acidic residues; that stretch reads EDEDEDDEDY. A Phosphotyrosine modification is found at Y33. Residue K115 forms a Glycyl lysine isopeptide (Lys-Gly) (interchain with G-Cter in ubiquitin) linkage. The Q motif motif lies at 181-209; sequence KSFKEMKFPAAILRGLKKKGILHPTPIQI. The 185-residue stretch at 212-396 folds into the Helicase ATP-binding domain; it reads IPTILSGRDM…KSALVKPVTI (185 aa). 225–232 provides a ligand contact to ATP; the sequence is AFTGSGKT. The DEAD box motif lies at 344 to 347; sequence DEAD. In terms of domain architecture, Helicase C-terminal spans 407-567; the sequence is DVIQEVEYVK…KVPPVLQVLH (161 aa). A Phosphotyrosine modification is found at Y414. Residues K416 and K442 each participate in a glycyl lysine isopeptide (Lys-Gly) (interchain with G-Cter in SUMO2) cross-link. Residues 580 to 597 form a CCHC-type zinc finger; it reads RGCAFCGGLGHRITDCPK.

Belongs to the DEAD box helicase family. DDX41 subfamily. As to quaternary structure, identified in the spliceosome C complex. Interacts with ERCC6. Interacts with FAM50A. Interacts with STING1. Interacts with CGAS. Interacts with several spliceosomes components such as PRP19 or CDC5L. Acetylation at Lys-9 regulates the nuclear/cytoplasmic localization. In terms of processing, phosphorylated by BTK; phosphorylation induces binding to dsDNA and STING1. Post-translationally, 'Lys-48'-linked ubiquitinated and degraded by TRIM21 leading to negative regulation of the innate immune response to intracellular dsDNA.

It is found in the nucleus. The protein localises to the cytoplasm. It carries out the reaction ATP + H2O = ADP + phosphate + H(+). Multifunctional protein that participates in many aspects of cellular RNA metabolism. Plays pivotal roles in innate immune sensing and hematopoietic homeostasis. Recognizes foreign or self-nucleic acids generated during microbial infection, thereby initiating anti-pathogen responses. Mechanistically, phosphorylation by BTK allows binding to dsDNA leading to interaction with STING1. Modulates the homeostasis of dsDNA through its ATP-dependent DNA-unwinding activity and ATP-independent strand-annealing activity. In turn, induces STING1-mediated type I interferon and cytokine responses to DNA and DNA viruses. During murine leukemia virus infection, primarily senses the DNA/RNA hybrid generated at the first step of reverse transcription, while cGAS recognizes dsDNA generated at the next step and both are needed for the antiretroviral innate immune response. Selectively modulates the transcription of certain immunity-associated genes by regulating their alternative splicing. Binds to RNA (R)-loops, structures consisting of DNA/RNA hybrids and a displaced strand of DNA that occur during transcription, and prevents their accumulation, thereby maintaining genome stability. Also participates in pre-mRNA splicing, translational regulation and snoRNA processing, which is essential for ribosome biogenesis. The chain is Probable ATP-dependent RNA helicase DDX41 (Ddx41) from Mus musculus (Mouse).